A 62-amino-acid chain; its full sequence is MAVPARKTSKTKKRMRRGHIKLATLNLAPCPNCGELRKSHVVCPSCGFYDGRQVVAVKNANN.

Belongs to the bacterial ribosomal protein bL32 family.

The polypeptide is Large ribosomal subunit protein bL32 (Levilactobacillus brevis (strain ATCC 367 / BCRC 12310 / CIP 105137 / JCM 1170 / LMG 11437 / NCIMB 947 / NCTC 947) (Lactobacillus brevis)).